The primary structure comprises 1404 residues: Clustered mitochondria protein homolog (1404 aa).

A Clu domain is found at 357 to 646 (HTHHADALRS…RLNPVDINWL (290 aa)). Over residues 528-540 (ADELPEADGETTE) the composition is skewed to acidic residues. 4 disordered regions span residues 528–561 (ADEL…SNKA), 706–735 (DAKA…ERLD), 996–1046 (GCHG…ARAT), and 1337–1372 (SERQ…GNGT). Over residues 706-723 (DAKAKEAASKEDGEKTEA) the composition is skewed to basic and acidic residues. 2 stretches are compositionally biased toward low complexity: residues 1021-1046 (NEQQ…ARAT) and 1358-1372 (AAIT…GNGT).

The protein belongs to the CLU family. In terms of assembly, may associate with the eukaryotic translation initiation factor 3 (eIF-3) complex.

It localises to the cytoplasm. Functionally, mRNA-binding protein involved in proper cytoplasmic distribution of mitochondria. The sequence is that of Clustered mitochondria protein homolog from Mycosarcoma maydis (Corn smut fungus).